The following is a 207-amino-acid chain: Protein GrpE (207 aa).

A disordered region spans residues 1–33; it reads MTDPNGPKDIPEQSAEAAEPVVSKPYIMPDDPE.

The protein belongs to the GrpE family. Homodimer.

It localises to the cytoplasm. Participates actively in the response to hyperosmotic and heat shock by preventing the aggregation of stress-denatured proteins, in association with DnaK and GrpE. It is the nucleotide exchange factor for DnaK and may function as a thermosensor. Unfolded proteins bind initially to DnaJ; upon interaction with the DnaJ-bound protein, DnaK hydrolyzes its bound ATP, resulting in the formation of a stable complex. GrpE releases ADP from DnaK; ATP binding to DnaK triggers the release of the substrate protein, thus completing the reaction cycle. Several rounds of ATP-dependent interactions between DnaJ, DnaK and GrpE are required for fully efficient folding. The chain is Protein GrpE from Rhodopseudomonas palustris (strain BisA53).